Reading from the N-terminus, the 243-residue chain is MDPSAALHRRPAGGGLGAVSPALSGGQARRRKQPPRPADFKLQVIIIGSRGVGKTSLMERFTDDTFCEACKSTVGVDFKIKTVELRGKKIRLQIWDTAGQERFNSITSAYYRSAKGIILVYDITKKETFDDLPKWMKMIDKYASEDAELLLVGNKLDCETDREISRQQGEKFAQQITGMRFCEASAKDNFNVDEIFLKLVDDILKKMPLDVLRSELSNSILSLQPEPEIPPELPPPRPHVRCC.

M1 is subject to N-acetylmethionine. A disordered region spans residues 1–36 (MDPSAALHRRPAGGGLGAVSPALSGGQARRRKQPPR). Phosphoserine occurs at positions 20 and 24. The GTP site is built by G51, V52, G53, K54, T55, S72, and T73. T55 serves as a coordination point for Mg(2+). Short sequence motifs (switch) lie at residues 64–78 (DTFC…GVDF) and 96–113 (DTAG…YYRS). 2 residues coordinate Mg(2+): T73 and D96. GTP is bound at residue G99. S105 carries the phosphoserine modification. Positions 154, 155, 157, 185, 186, and 187 each coordinate GTP. 2 S-geranylgeranyl cysteine lipidation sites follow: C242 and C243.

Belongs to the small GTPase superfamily. Rab family. In terms of assembly, interacts with RABIF and OPTN. Interacts with LRRK2; interaction facilitates phosphorylation of Ser-105. Interacts with GDI1, GDI2 and CHM; these interactions are disrupted by phosphorylation on Ser-105. Interacts with RILPL1 and RILPL2; these interactions are dependent on phosphorylation of Ser-105. Mg(2+) serves as cofactor. In terms of processing, phosphorylation of Ser-105 in the switch II region by LRRK2 prevents the association of RAB regulatory proteins, including CHM and RAB GDP dissociation inhibitors GDI1 and GDI2. In terms of tissue distribution, highest levels in skeletal and cardiac muscle. Also found in comparable amounts in brain, spinal cord and lung. Also detected in testis where it is expressed by Sertoli cells of the seminiferous tubules (at protein level).

The protein localises to the recycling endosome membrane. It is found in the lysosome membrane. It localises to the golgi apparatus membrane. The protein resides in the cytoplasmic vesicle. Its subcellular location is the autophagosome. The enzyme catalyses GTP + H2O = GDP + phosphate + H(+). Regulated by guanine nucleotide exchange factors (GEFs) including DENND3 which promote the exchange of bound GDP for free GTP. Regulated by GTPase activating proteins (GAPs) which increase the GTP hydrolysis activity. Inhibited by GDP dissociation inhibitors (GDIs). In terms of biological role, the small GTPases Rab are key regulators of intracellular membrane trafficking, from the formation of transport vesicles to their fusion with membranes. Rabs cycle between an inactive GDP-bound form and an active GTP-bound form that is able to recruit to membranes different sets of downstream effectors directly responsible for vesicle formation, movement, tethering and fusion. RAB12 may play a role in protein transport from recycling endosomes to lysosomes regulating, for instance, the degradation of the transferrin receptor. Involved in autophagy. The sequence is that of Ras-related protein Rab-12 from Rattus norvegicus (Rat).